The chain runs to 228 residues: UPF0056 membrane protein MJ0972 (228 aa).

The next 5 helical transmembrane spans lie at 22–42 (FYIYGFVSLFITIDPIGLIPI), 68–88 (VVLLLFALFGNYIFGYFGITI), 133–153 (VPLAIPLISGPGAITTTMILI), 163–183 (GVVVLSILSAMLVSGIILSLT), and 201–221 (IMGLLLVAISVQIIFTGIVGL).

Belongs to the UPF0056 (MarC) family.

The protein resides in the cell membrane. The polypeptide is UPF0056 membrane protein MJ0972 (Methanocaldococcus jannaschii (strain ATCC 43067 / DSM 2661 / JAL-1 / JCM 10045 / NBRC 100440) (Methanococcus jannaschii)).